A 178-amino-acid polypeptide reads, in one-letter code: 3-hydroxyacyl-[acyl-carrier-protein] dehydratase FabZ (178 aa).

Residue His-54 is part of the active site.

The protein belongs to the thioester dehydratase family. FabZ subfamily.

Its subcellular location is the cytoplasm. It carries out the reaction a (3R)-hydroxyacyl-[ACP] = a (2E)-enoyl-[ACP] + H2O. In terms of biological role, involved in unsaturated fatty acids biosynthesis. Catalyzes the dehydration of short chain beta-hydroxyacyl-ACPs and long chain saturated and unsaturated beta-hydroxyacyl-ACPs. This is 3-hydroxyacyl-[acyl-carrier-protein] dehydratase FabZ from Yersinia enterocolitica.